The primary structure comprises 227 residues: MKSLASPPCLRLIPTAHRQLNSRQSSSACYIHGGSSVNKSNNLSFSSSTSGFASPLAVEKELRSSFVQTAAVRHVTGSLIRGEGLRFAIVVARFNEVVTKLLLEGAIETFKKYSVREEDIEVIWVPGSFEIGVVAQNLGKSGKFHAVLCIGAVIRGDTTHYDAVANSAASGVLSASINSGVPCIFGVLTCEDMDQALNRSGGKAGNKGAETALTALEMASLFEHHLK.

The transit peptide at 1–71 directs the protein to the chloroplast; the sequence is MKSLASPPCL…LRSSFVQTAA (71 aa). 5-amino-6-(D-ribitylamino)uracil-binding positions include Phe94, 128 to 130, and 152 to 154; these read SFE and AVI. Residue 157–158 participates in (2S)-2-hydroxy-3-oxobutyl phosphate binding; sequence DT. The active-site Proton donor is His160. Position 185 (Phe185) interacts with 5-amino-6-(D-ribitylamino)uracil. Arg199 is a (2S)-2-hydroxy-3-oxobutyl phosphate binding site.

The protein belongs to the DMRL synthase family. Oligomer forming an icosahedral capsid.

The protein resides in the plastid. Its subcellular location is the chloroplast. The catalysed reaction is (2S)-2-hydroxy-3-oxobutyl phosphate + 5-amino-6-(D-ribitylamino)uracil = 6,7-dimethyl-8-(1-D-ribityl)lumazine + phosphate + 2 H2O + H(+). Its pathway is cofactor biosynthesis; riboflavin biosynthesis; riboflavin from 2-hydroxy-3-oxobutyl phosphate and 5-amino-6-(D-ribitylamino)uracil: step 1/2. Catalyzes the formation of 6,7-dimethyl-8-ribityllumazine by condensation of 5-amino-6-(D-ribitylamino)uracil with 3,4-dihydroxy-2-butanone 4-phosphate. This is the penultimate step in the biosynthesis of riboflavin. The sequence is that of 6,7-dimethyl-8-ribityllumazine synthase, chloroplastic from Arabidopsis thaliana (Mouse-ear cress).